The chain runs to 159 residues: Cyclic pyranopterin monophosphate synthase (159 aa).

Substrate is bound by residues 76 to 78 and 114 to 115; these read LCH and ME. Asp-129 is an active-site residue.

Belongs to the MoaC family. As to quaternary structure, homohexamer; trimer of dimers.

It carries out the reaction (8S)-3',8-cyclo-7,8-dihydroguanosine 5'-triphosphate = cyclic pyranopterin phosphate + diphosphate. Its pathway is cofactor biosynthesis; molybdopterin biosynthesis. Catalyzes the conversion of (8S)-3',8-cyclo-7,8-dihydroguanosine 5'-triphosphate to cyclic pyranopterin monophosphate (cPMP). The chain is Cyclic pyranopterin monophosphate synthase from Oleidesulfovibrio alaskensis (strain ATCC BAA-1058 / DSM 17464 / G20) (Desulfovibrio alaskensis).